Reading from the N-terminus, the 686-residue chain is Translation initiation factor IF-2 (686 aa).

Residues 35–99 (MSTVEDETAE…EHGQKDTDRR (65 aa)) are disordered. Residues 50 to 68 (LQEEDKPEEKISKKEPDKK) show a composition bias toward basic and acidic residues. Over residues 69–79 (DRKKTKGKKQM) the composition is skewed to basic residues. The span at 87-99 (EGTEHGQKDTDRR) shows a compositional bias: basic and acidic residues. Residues 186–355 (LRPPIVTVMG…LLVAEMEELK (170 aa)) enclose the tr-type G domain. The segment at 195 to 202 (GHVDHGKT) is G1. Residue 195 to 202 (GHVDHGKT) participates in GTP binding. Positions 220–224 (GITQH) are G2. A G3 region spans residues 241 to 244 (DTPG). GTP-binding positions include 241–245 (DTPGH) and 295–298 (NKVD). The segment at 295-298 (NKVD) is G4. The tract at residues 331–333 (SAL) is G5.

It belongs to the TRAFAC class translation factor GTPase superfamily. Classic translation factor GTPase family. IF-2 subfamily.

It is found in the cytoplasm. One of the essential components for the initiation of protein synthesis. Protects formylmethionyl-tRNA from spontaneous hydrolysis and promotes its binding to the 30S ribosomal subunits. Also involved in the hydrolysis of GTP during the formation of the 70S ribosomal complex. This Halothermothrix orenii (strain H 168 / OCM 544 / DSM 9562) protein is Translation initiation factor IF-2.